The sequence spans 254 residues: UPF0246 protein FTM_0239 (254 aa).

The protein belongs to the UPF0246 family.

In Francisella tularensis subsp. mediasiatica (strain FSC147), this protein is UPF0246 protein FTM_0239.